The primary structure comprises 167 residues: V-type proton ATPase subunit c' (167 aa).

At 1–13 (MAEIMADSELAPK) the chain is on the lumenal side. The helical transmembrane segment at 14–34 (FAPFIGMAGIAAAMIFGSAGA) threads the bilayer. Residues 35–59 (AYGTAKSGIGIAGVGTFRPDLIMKC) lie on the Cytoplasmic side of the membrane. The chain crosses the membrane as a helical span at residues 60 to 80 (LIPVVMSGIIAVYALVVAVLI). Residues 81-101 (AQDLGPPGSGQHYSLFNGFMH) are Lumenal-facing. Residues 102–122 (LACGLSVGLTGLAAGYCIGIV) traverse the membrane as a helical segment. The Cytoplasmic portion of the chain corresponds to 123–140 (GDKGVRSFMLQSRIFVGM). The helical transmembrane segment at 141–161 (VLILIFGEVLGLYGLIVALIL) threads the bilayer. Over 162 to 167 (NTKSKG) the chain is Lumenal.

This sequence belongs to the V-ATPase proteolipid subunit family. V-ATPase is a heteromultimeric enzyme composed of a peripheral catalytic V1 complex (components A to H) attached to an integral membrane V0 proton pore complex (components: a, c, c', c'', d, e, f and VOA1). The decameric c-ring forms the proton-conducting pore, and is composed of eight proteolipid subunits c, one subunit c' and one subunit c''.

It is found in the vacuole membrane. Functionally, proton-conducting pore forming subunit of the V0 complex of vacuolar(H+)-ATPase (V-ATPase), a multisubunit enzyme composed of a peripheral complex (V1) that hydrolyzes ATP and a membrane integral complex (V0) that translocates protons. V-ATPase is responsible for acidifying and maintaining the pH of intracellular compartments. In Neurospora crassa (strain ATCC 24698 / 74-OR23-1A / CBS 708.71 / DSM 1257 / FGSC 987), this protein is V-type proton ATPase subunit c' (vma-11).